Here is a 435-residue protein sequence, read N- to C-terminus: MRLRSFAFLGFMLLVAMAPSMASAQPQPLDRIVAVVNKDAIMQSRLEDRVTQVRRQMASRNVPAPNEADLRRQVLDRMILEQIQLQMAERANLSIDDTQLNATVRGIAEDNGMSMDEFADALEEDGMSLASMREQVRREMLLRQVQQSQVASRVNVTDREVERYLDQQGETADTAYHLAHILVSVPESPTPEQVEQAQAKVRDLYRQLQNGANFAQLATAESDGQQALSGGDLGWRRGDQLPSLFADVVPTLSNGEVSEPIRSPSGFHLVKLIDTRGQQGEQKRVVTENRVRHILIGTNPNRNDQQAEALARDIRQRIANGESFAALAQEYSDDDGSALDGGELGWTRPGQMVPAFEDAVKALDVGELSQPVRSRFGYHVIELEDRRRQDVTRDAQREQIRQTLFQRKVSDEMEAWTQEIRSGAYIDNRLEDGRQ.

The first 24 residues, 1-24, serve as a signal peptide directing secretion; sequence MRLRSFAFLGFMLLVAMAPSMASA. PpiC domains follow at residues 173–274 and 286–385; these read DTAY…KLID and VTEN…ELED.

It is found in the periplasm. It catalyses the reaction [protein]-peptidylproline (omega=180) = [protein]-peptidylproline (omega=0). In terms of biological role, chaperone involved in the correct folding and assembly of outer membrane proteins. Recognizes specific patterns of aromatic residues and the orientation of their side chains, which are found more frequently in integral outer membrane proteins. May act in both early periplasmic and late outer membrane-associated steps of protein maturation. The protein is Chaperone SurA of Chromohalobacter salexigens (strain ATCC BAA-138 / DSM 3043 / CIP 106854 / NCIMB 13768 / 1H11).